Here is a 720-residue protein sequence, read N- to C-terminus: Hexanoyl-CoA synthase (720 aa).

The helical transmembrane segment at 242–262 (VDAVVIYLAIVLAGYVVVSIA) threads the bilayer. Position 290–293 (290–293 (RGKK)) interacts with CoA. Residues 477 to 479 (GEA), 499 to 504 (EMCGGT), Glu-585, and Arg-607 each bind ATP. Residue Gly-615 participates in CoA binding. Lys-618 lines the ATP pocket. CoA is bound at residue Gln-681.

This sequence belongs to the ATP-dependent AMP-binding enzyme family. Requires Mg(2+) as cofactor. Accumulates in glandular trichomes, especially in female flowers. Present at low levels in roots, stems and leaves.

Its subcellular location is the cytoplasm. The protein localises to the cytosol. It localises to the membrane. It catalyses the reaction hexanoate + ATP + CoA = hexanoyl-CoA + AMP + diphosphate. It participates in secondary metabolite biosynthesis; terpenoid biosynthesis. Inhibitied by high CoA concentrations. Involved in the biosynthesis of cannabinoids-related terpenophenolic natural products, which have pharmacological activity. Acyl-activating enzyme that catalyzes the conversion of hexanoic acid to hexanoyl-CoA, precursor of the cannabinoid pathway. Can also activate other fatty acids including heptanoate, octanoate and nonanoate. This is Hexanoyl-CoA synthase from Cannabis sativa (Hemp).